Here is a 513-residue protein sequence, read N- to C-terminus: Sulfhydryl oxidase 1 (513 aa).

An N-terminal signal peptide occupies residues 1-30 (MAAAAVARRVVLVLVLAAASLAAAPRGAAA). A Thioredoxin domain is found at 31–174 (RSLGGREGPG…LLKWINNQMK (144 aa)). N51 carries an N-linked (GlcNAc...) asparagine glycan. Residues C76 and C79 each act as nucleophile in the active site. Cysteines 76 and 79 form a disulfide. 2 N-linked (GlcNAc...) asparagine glycosylation sites follow: N193 and N266. C301 and C313 are disulfide-bonded. In terms of domain architecture, ERV/ALR sulfhydryl oxidase spans 304–406 (SKSETRGFSC…GDPLFPKVTW (103 aa)). FAD contacts are provided by residues R309, W316, H320, E350, H354, 377-384 (WSTHNKVN), K403, and W406. Residues C348 and C351 are joined by a disulfide bond. C412 and C415 are disulfide-bonded.

Requires FAD as cofactor.

It localises to the secreted. It carries out the reaction 2 R'C(R)SH + O2 = R'C(R)S-S(R)CR' + H2O2. Its function is as follows. Catalyzes the oxidation of sulfhydryl groups in peptide and protein thiols to disulfides with the reduction of oxygen to hydrogen peroxide. May contribute to disulfide bond formation in a variety of secreted proteins. The sequence is that of Sulfhydryl oxidase 1 (QSOX1) from Oryza sativa subsp. japonica (Rice).